The chain runs to 243 residues: tRNA (guanine-N(1)-)-methyltransferase (243 aa).

S-adenosyl-L-methionine-binding positions include G113 and 133 to 138 (IGDFVL).

It belongs to the RNA methyltransferase TrmD family. As to quaternary structure, homodimer.

It localises to the cytoplasm. The catalysed reaction is guanosine(37) in tRNA + S-adenosyl-L-methionine = N(1)-methylguanosine(37) in tRNA + S-adenosyl-L-homocysteine + H(+). Functionally, specifically methylates guanosine-37 in various tRNAs. This Bacillus licheniformis (strain ATCC 14580 / DSM 13 / JCM 2505 / CCUG 7422 / NBRC 12200 / NCIMB 9375 / NCTC 10341 / NRRL NRS-1264 / Gibson 46) protein is tRNA (guanine-N(1)-)-methyltransferase.